We begin with the raw amino-acid sequence, 293 residues long: Protein YIF1A (293 aa).

The tract at residues 1 to 27 is disordered; sequence MAYHSAYGVHGSKHRTRAAPDPPPLFD. An N-acetylalanine modification is found at Ala2. The Cytoplasmic segment spans residues 2-138; that stretch reads AYHSAYGVHG…PPRKDLNAPD (137 aa). Ser12 carries the phosphoserine modification. The helical transmembrane segment at 139–159 threads the bilayer; the sequence is LYIPTMAFITYVLLAGMALGI. Residues 160–174 lie on the Lumenal side of the membrane; it reads QQRFSPEVLGLCAST. The chain crosses the membrane as a helical span at residues 175–195; it reads ALVWVFMEVLALLLGLYLATV. Over 196-203 the chain is Cytoplasmic; the sequence is RSELSTFH. A helical transmembrane segment spans residues 204–226; the sequence is LLAYSGYKYVGMILSVLTGLLFG. Residues 227–229 lie on the Lumenal side of the membrane; sequence SDG. Residues 230–249 form a helical membrane-spanning segment; the sequence is YYVALAWTSSALMYFIVRSL. Topologically, residues 250-271 are cytoplasmic; the sequence is RTAASGPDSMGGPAPRQRLQLY. Residues 272 to 292 traverse the membrane as a helical segment; sequence LTLGAAAFQPLIIYWLTFHLV.

It belongs to the YIF1 family. Interacts with YIPF5.

The protein resides in the endoplasmic reticulum membrane. It localises to the golgi apparatus membrane. The protein localises to the endoplasmic reticulum-Golgi intermediate compartment membrane. Functionally, possible role in transport between endoplasmic reticulum and Golgi. In Mus musculus (Mouse), this protein is Protein YIF1A (Yif1a).